A 265-amino-acid chain; its full sequence is Palmitoyltransferase ZDHHC21 (265 aa).

Residues 1–16 (MGLRIHFVVDPHGWCC) lie on the Cytoplasmic side of the membrane. The chain crosses the membrane as a helical span at residues 17-37 (MGLIVFVWLYNFFLIPKIVLF). Residues 38–44 (PHYEEGH) are Extracellular-facing. A helical transmembrane segment spans residues 45–65 (IPGILIIIFYGIAMFCLVALV). Topologically, residues 66–133 (RASITDPGRL…NNCVGEDNHW (68 aa)) are cytoplasmic. Positions 90-140 (ELCNKCNLMRPKRSHHCSRCGHCVRRMDHHCPWINNCVGEDNHWLFLQLCF) constitute a DHHC domain. Residue Cys-120 is the S-palmitoyl cysteine intermediate of the active site. The helical transmembrane segment at 134–154 (LFLQLCFYTELLTCYALMFSF) threads the bilayer. The Extracellular segment spans residues 155 to 185 (CHYYYFLPLKKRNLDLFVVRHELAIMRLAAF). The helical transmembrane segment at 186 to 206 (MGITMLVGITGLFYTQLIGII) threads the bilayer. The Cytoplasmic segment spans residues 207-265 (TDTTSIEKMSNCCEEISRPRKPWQQTFSEVFGTRWKILWFIPFRRRQPLRVPYHFANHV).

Belongs to the DHHC palmitoyltransferase family.

The protein localises to the golgi apparatus membrane. Its subcellular location is the golgi apparatus. It is found in the cis-Golgi network membrane. The protein resides in the cell membrane. It catalyses the reaction L-cysteinyl-[protein] + hexadecanoyl-CoA = S-hexadecanoyl-L-cysteinyl-[protein] + CoA. In terms of biological role, palmitoyltransferase that catalyzes the addition of palmitate onto various protein substrates. Palmitoylates sex steroid hormone receptors, including ESR1, PGR and AR, thereby regulating their targeting to the plasma membrane. This affects rapid intracellular signaling by sex hormones via ERK and AKT kinases and the generation of cAMP, but does not affect that mediated by their nuclear receptor. Palmitoylates FYN, regulates its localization in hair follicles and plays a key role in epidermal homeostasis and hair follicle differentiation. Through the palmitoylation of PLCB1 and the regulation of PLCB1 downstream signaling may indirectly regulate the function of the endothelial barrier and the adhesion of leukocytes to the endothelium. Also has a palmitoyltransferase activity toward ADRA1D, positively regulating its activity and expression and may thereby play a role in vascular contraction. May also palmitoylate eNOS and LCK. The protein is Palmitoyltransferase ZDHHC21 of Bos taurus (Bovine).